The following is a 558-amino-acid chain: Acylase ACY 1 proenzyme (558 aa).

Catalysis depends on Thr-368, which acts as the Nucleophile.

The protein belongs to the gamma-glutamyltransferase family. In terms of assembly, dimer of two non-identical chains processed from the same precursor.

It catalyses the reaction (7R)-7-(4-carboxybutanamido)cephalosporanate + H2O = (7R)-7-aminocephalosporanate + glutarate. The enzyme catalyses an N-terminal (5-L-glutamyl)-[peptide] + an alpha-amino acid = 5-L-glutamyl amino acid + an N-terminal L-alpha-aminoacyl-[peptide]. The catalysed reaction is glutathione + H2O = L-cysteinylglycine + L-glutamate. It carries out the reaction an S-substituted glutathione + H2O = an S-substituted L-cysteinylglycine + L-glutamate. Its function is as follows. Besides the cephalosporin acylase I activity which converts GL-7ACA into 7-ACA; this enzyme displays some gamma glutamyltranspeptidase activity. This chain is Acylase ACY 1 proenzyme (acyI), found in Pseudomonas sp. (strain SE83).